Consider the following 553-residue polypeptide: Phosphoglucomutase (553 aa).

Positions 1–24 (MQATVKRYPTTPISGQTMGTSGLR) are disordered. The span at 11–20 (TPISGQTMGT) shows a compositional bias: polar residues. Substrate is bound by residues threonine 20, arginine 24, 117–118 (SH), and lysine 131. The active-site Phosphoserine intermediate is the serine 117. Serine 117 contacts Mg(2+). Positions 289, 291, and 293 each coordinate Mg(2+). Residues 293–294 (DR), threonine 352, 371–373 (EES), lysine 384, and arginine 509 contribute to the substrate site.

It belongs to the phosphohexose mutase family. It depends on Mg(2+) as a cofactor.

The protein localises to the cytoplasm. The catalysed reaction is alpha-D-glucose 1-phosphate = alpha-D-glucose 6-phosphate. In terms of biological role, this enzyme participates in both the breakdown and synthesis of glucose. The protein is Phosphoglucomutase (pgm) of Entamoeba dispar.